The sequence spans 188 residues: Adenine phosphoribosyltransferase (188 aa).

The protein belongs to the purine/pyrimidine phosphoribosyltransferase family. In terms of assembly, homodimer.

It is found in the cytoplasm. It carries out the reaction AMP + diphosphate = 5-phospho-alpha-D-ribose 1-diphosphate + adenine. It functions in the pathway purine metabolism; AMP biosynthesis via salvage pathway; AMP from adenine: step 1/1. Its function is as follows. Catalyzes a salvage reaction resulting in the formation of AMP, that is energically less costly than de novo synthesis. The polypeptide is Adenine phosphoribosyltransferase (Burkholderia ambifaria (strain MC40-6)).